The primary structure comprises 279 residues: Putative pyruvate, phosphate dikinase regulatory protein (279 aa).

Residue 153–160 participates in ADP binding; it reads GISRTSKT.

The protein belongs to the pyruvate, phosphate/water dikinase regulatory protein family. PDRP subfamily.

The enzyme catalyses N(tele)-phospho-L-histidyl/L-threonyl-[pyruvate, phosphate dikinase] + ADP = N(tele)-phospho-L-histidyl/O-phospho-L-threonyl-[pyruvate, phosphate dikinase] + AMP + H(+). The catalysed reaction is N(tele)-phospho-L-histidyl/O-phospho-L-threonyl-[pyruvate, phosphate dikinase] + phosphate + H(+) = N(tele)-phospho-L-histidyl/L-threonyl-[pyruvate, phosphate dikinase] + diphosphate. Functionally, bifunctional serine/threonine kinase and phosphorylase involved in the regulation of the pyruvate, phosphate dikinase (PPDK) by catalyzing its phosphorylation/dephosphorylation. This is Putative pyruvate, phosphate dikinase regulatory protein from Brucella abortus (strain 2308).